Reading from the N-terminus, the 89-residue chain is Small ribosomal subunit protein uS15 (89 aa).

Belongs to the universal ribosomal protein uS15 family. In terms of assembly, part of the 30S ribosomal subunit. Forms a bridge to the 50S subunit in the 70S ribosome, contacting the 23S rRNA.

One of the primary rRNA binding proteins, it binds directly to 16S rRNA where it helps nucleate assembly of the platform of the 30S subunit by binding and bridging several RNA helices of the 16S rRNA. Functionally, forms an intersubunit bridge (bridge B4) with the 23S rRNA of the 50S subunit in the ribosome. In Pseudomonas savastanoi pv. phaseolicola (strain 1448A / Race 6) (Pseudomonas syringae pv. phaseolicola (strain 1448A / Race 6)), this protein is Small ribosomal subunit protein uS15.